The following is a 44-amino-acid chain: Mu-conotoxin-like Cal 12.1.2f (44 aa).

Intrachain disulfides connect cysteine 3/cysteine 15, cysteine 10/cysteine 27, cysteine 17/cysteine 32, and cysteine 26/cysteine 38. The residue at position 16 (tryptophan 16) is a 6'-bromotryptophan. Position 22 is a 4-hydroxyproline (proline 22). 2 positions are modified to 6'-bromotryptophan: tryptophan 36 and tryptophan 37. Residue proline 39 is modified to 4-hydroxyproline. Tryptophan 43 bears the 6'-bromotryptophan mark.

As to expression, expressed by the venom duct.

The protein resides in the secreted. Functionally, mu-conotoxins block voltage-gated sodium channels. This toxin reversibly blocks voltage-gated sodium channel in cephalopods, with no alteration in the voltage dependence of sodium conductance or on the kinetics of inactivation. The polypeptide is Mu-conotoxin-like Cal 12.1.2f (Californiconus californicus (California cone)).